A 379-amino-acid chain; its full sequence is MKILRKNHPLLKIINHSFIDLPTPSNISSWWNFGSLLGMCLVIQILTGLFLAMHYTSDTTTAFSSVAHICRDVNYGWLIRYLHANGASMFFICLFIHVGRGIYYGSYVLSETWNIGIILFLTTMATAFVGYVLPWGQMSFWGATVITNLLSAIPYIGSTLVEWIWGGFSVDKATLTRFFAFHFILPFIIAAFALVHLLFLHETGSNNPSGLNSDSDKIPFHPYYTTKDLLGIFLLLLVLMILALFFPDILGDPDNFTPANPLNTPAHXXPXXXXLFAYAILRSIPNKLGGVLALILSILILAAFPLLNTSKQHGLIFRPVTQVIYWXXIANLLVLTWIGGQPVEYPFTMIGQIASITYFAIXIILIPVSNTIENNIIKL.

4 helical membrane passes run 33 to 53, 77 to 98, 113 to 133, and 178 to 198; these read FGSL…FLAM, WLIR…FIHV, WNIG…GYVL, and FFAF…VHLL. Heme b contacts are provided by histidine 83 and histidine 97. Heme b contacts are provided by histidine 182 and histidine 196. Residue histidine 201 coordinates a ubiquinone. Helical transmembrane passes span 226–246, 288–308, 320–340, and 347–367; these read TKDL…ALFF, LGGV…PLLN, VTQV…WIGG, and FTMI…ILIP.

It belongs to the cytochrome b family. The cytochrome bc1 complex contains 11 subunits: 3 respiratory subunits (MT-CYB, CYC1 and UQCRFS1), 2 core proteins (UQCRC1 and UQCRC2) and 6 low-molecular weight proteins (UQCRH/QCR6, UQCRB/QCR7, UQCRQ/QCR8, UQCR10/QCR9, UQCR11/QCR10 and a cleavage product of UQCRFS1). This cytochrome bc1 complex then forms a dimer. Heme b serves as cofactor.

It is found in the mitochondrion inner membrane. In terms of biological role, component of the ubiquinol-cytochrome c reductase complex (complex III or cytochrome b-c1 complex) that is part of the mitochondrial respiratory chain. The b-c1 complex mediates electron transfer from ubiquinol to cytochrome c. Contributes to the generation of a proton gradient across the mitochondrial membrane that is then used for ATP synthesis. This chain is Cytochrome b (MT-CYB), found in Akodon lutescens puer (Altiplano grass mouse).